Consider the following 494-residue polypeptide: Sulfate adenylyltransferase subunit 1 (494 aa).

One can recognise a tr-type G domain in the interval 24-240 (TRPLRLITCG…LELATVRSAQ (217 aa)). The segment at 33–40 (GSVDDGKS) is G1. 33–40 (GSVDDGKS) is a binding site for GTP. The G2 stretch occupies residues 91–95 (GITID). The interval 112–115 (DTPG) is G3. GTP is bound by residues 112–116 (DTPGH) and 167–170 (NKID). The G4 stretch occupies residues 167–170 (NKID). Residues 204-206 (SAL) form a G5 region.

Belongs to the TRAFAC class translation factor GTPase superfamily. Classic translation factor GTPase family. CysN/NodQ subfamily. As to quaternary structure, heterodimer composed of CysD, the smaller subunit, and CysN.

It carries out the reaction sulfate + ATP + H(+) = adenosine 5'-phosphosulfate + diphosphate. It functions in the pathway sulfur metabolism; hydrogen sulfide biosynthesis; sulfite from sulfate: step 1/3. Its function is as follows. With CysD forms the ATP sulfurylase (ATPS) that catalyzes the adenylation of sulfate producing adenosine 5'-phosphosulfate (APS) and diphosphate, the first enzymatic step in sulfur assimilation pathway. APS synthesis involves the formation of a high-energy phosphoric-sulfuric acid anhydride bond driven by GTP hydrolysis by CysN coupled to ATP hydrolysis by CysD. The chain is Sulfate adenylyltransferase subunit 1 from Rhizobium tropici.